A 315-amino-acid chain; its full sequence is Long form salivary protein D7L2 (315 aa).

Residues 1-18 (MIVAPVVLSIFLQLFVQA) form the signal peptide. 4 cysteine pairs are disulfide-bonded: C37-C73, C69-C128, C178-C211, and C252-C263.

It belongs to the PBP/GOBP family. As to quaternary structure, interacts with host coagulation factor XII/F12 (inactive and activated). Interacts with host coagulation factor XI/F11 (inactive).

It localises to the secreted. Its function is as follows. Modulates blood feeding of female mosquitoes on vertebrate species by binding and sequestering different mediators involved in the host response. Binds leukotriene B4 and leukotriene D4. Exhibits anticoagulant activity targeting the intrinsic coagulation pathway; binds coagulation factors XII and XI, preventing generation of activated FXIIa and FXIa. This chain is Long form salivary protein D7L2, found in Anopheles gambiae (African malaria mosquito).